The chain runs to 428 residues: Spliceosome RNA helicase DDX39B (428 aa).

A compositionally biased stretch (acidic residues) spans 1–19; sequence MAENDVDNELLDYEDDEVE. Residues 1-31 form a disordered region; it reads MAENDVDNELLDYEDDEVETAAGGDGAEAPA. Ala2 is subject to N-acetylalanine. Lys36 bears the N6-acetyllysine; alternate mark. Residue Lys36 forms a Glycyl lysine isopeptide (Lys-Gly) (interchain with G-Cter in SUMO2); alternate linkage. Residues Ser38 and Ser41 each carry the phosphoserine modification. The Q motif motif lies at 45–73; sequence SGFRDFLLKPELLRAIVDCGFEHPSEVQH. The 174-residue stretch at 76 to 249 folds into the Helicase ATP-binding domain; it reads IPQAILGMDV…RKFMQDPMEI (174 aa). 89–96 contacts ATP; that stretch reads AKSGMGKT. Phosphothreonine is present on Thr172. The DECD box motif lies at 196–199; it reads DECD. In terms of domain architecture, Helicase C-terminal spans 261-422; sequence GLQQYYVKLK…ELPDEIDISS (162 aa).

The protein belongs to the DEAD box helicase family. DECD subfamily. In terms of assembly, homodimer, and heterodimer with DDX39A. DDX39B interacts with the THO subcomplex to form the THO-DDX39B complex which multimerizes into a 28-subunit tetrameric assembly. Component of the transcription/export (TREX) complex at least composed of ALYREF/THOC4, DDX39B, SARNP/CIP29, CHTOP and the THO subcomplex; in the complex interacts with THOC2. THOC1-THOC2-THOC3-DDX39B subcomplex is sufficient for the interaction with export factor NXF1-NXT1. TREX seems to have a dynamic structure involving ATP-dependent remodeling. Within the TREX complex bridges ALYREF/THOC4 and the THO subcomplex, and, in a ATP-dependent manner, ALYREF/THOC4 and SARNP/CIP29. Component of the spliceosome. Interacts directly with U2AF2. Interacts with RBM8A, RNPS1 and SRRM1, FYTTD1/UIF, THOC1, MX1 and POLDIP3. Interacts with LUZP4. Interacts with SARNP/CIP29 (via the C-terminal domain); the interaction is direct and facilitates RNA binding of DDX39B. As to quaternary structure, (Microbial infection) Interacts with human cytomegalovirus/HHV-5 protein UL69.

Its subcellular location is the nucleus. The protein resides in the nucleus speckle. It localises to the cytoplasm. It catalyses the reaction ATP + H2O = ADP + phosphate + H(+). Its function is as follows. Involved in nuclear export of spliced and unspliced mRNA. Component of the TREX complex which is thought to couple mRNA transcription, processing and nuclear export, and specifically associates with spliced mRNA and not with unspliced pre-mRNA. The TREX complex is recruited to spliced mRNAs by a transcription-independent mechanism, binds to mRNA upstream of the exon-junction complex (EJC) and is recruited in a splicing- and cap-dependent manner to a region near the 5' end of the mRNA where it functions in mRNA export to the cytoplasm via the TAP/NXF1 pathway. The THOC1-THOC2-THOC3 core complex alone is sufficient to promote ATPase activity of DDX39B; in the complex THOC2 is the only component that directly interacts with DDX39B. Associates with SARNP/CIP29, which facilitates RNA binding of DDX39B and likely plays a role in mRNA export. May undergo several rounds of ATP hydrolysis during assembly of TREX to drive subsequent loading of components such as ALYREF/THOC4 and CHTOP onto mRNA. Also associates with pre-mRNA independent of ALYREF/THOC4. Involved in the nuclear export of intronless mRNA; the ATP-bound form is proposed to recruit export adapter ALYREF/THOC4 to intronless mRNA; its ATPase activity is cooperatively stimulated by RNA and ALYREF/THOC4 and ATP hydrolysis is thought to trigger the dissociation from RNA to allow the association of ALYREF/THOC4 and the NXF1-NXT1 heterodimer. Involved in transcription elongation and genome stability. Splice factor that is required for the first ATP-dependent step in spliceosome assembly and for the interaction of U2 snRNP with the branchpoint. Has both RNA-stimulated ATP binding/hydrolysis activity and ATP-dependent RNA unwinding activity. Even with the stimulation of RNA, the ATPase activity is weak. Can only hydrolyze ATP but not other NTPs. The RNA stimulation of ATPase activity does not have a strong preference for the sequence and length of the RNA. However, ssRNA stimulates the ATPase activity much more strongly than dsRNA. Can unwind 5' or 3' overhangs or blunt end RNA duplexes in vitro. The ATPase and helicase activities are not influenced by U2AF2; the effect of ALYREF/THOC4 is reported conflictingly with [PubMed:23299939] reporting a stimulatory effect. In terms of biological role, (Microbial infection) The TREX complex is essential for the export of Kaposi's sarcoma-associated herpesvirus (KSHV) intronless mRNAs and infectious virus production. This Homo sapiens (Human) protein is Spliceosome RNA helicase DDX39B.